A 206-amino-acid polypeptide reads, in one-letter code: Probable N-acetyltransferase 14 (206 aa).

One can recognise an N-acetyltransferase domain in the interval 6 to 206; sequence LSVREMREDE…TLVREFSKDL (201 aa). The helical transmembrane segment at 57 to 77 threads the bilayer; sequence FVLASFALALLLPVFLAVAAV.

This sequence belongs to the camello family. In terms of tissue distribution, expressed in K-562 and HeLa cell lines and in brain.

It is found in the membrane. Its function is as follows. Probable acetyltransferase. In terms of biological role, may act as a transcription factor that regulates the expression of coproporphyrinogen oxidase by binding to a promoter regulatory element. This Homo sapiens (Human) protein is Probable N-acetyltransferase 14 (NAT14).